A 180-amino-acid polypeptide reads, in one-letter code: ATP synthase subunit b (180 aa).

A helical transmembrane segment spans residues 15-35; the sequence is LIPEVPELVIGLLAFAIVFFV.

This sequence belongs to the ATPase B chain family. As to quaternary structure, F-type ATPases have 2 components, F(1) - the catalytic core - and F(0) - the membrane proton channel. F(1) has five subunits: alpha(3), beta(3), gamma(1), delta(1), epsilon(1). F(0) has three main subunits: a(1), b(2) and c(10-14). The alpha and beta chains form an alternating ring which encloses part of the gamma chain. F(1) is attached to F(0) by a central stalk formed by the gamma and epsilon chains, while a peripheral stalk is formed by the delta and b chains.

Its subcellular location is the cell membrane. Functionally, f(1)F(0) ATP synthase produces ATP from ADP in the presence of a proton or sodium gradient. F-type ATPases consist of two structural domains, F(1) containing the extramembraneous catalytic core and F(0) containing the membrane proton channel, linked together by a central stalk and a peripheral stalk. During catalysis, ATP synthesis in the catalytic domain of F(1) is coupled via a rotary mechanism of the central stalk subunits to proton translocation. Its function is as follows. Component of the F(0) channel, it forms part of the peripheral stalk, linking F(1) to F(0). In Streptomyces avermitilis (strain ATCC 31267 / DSM 46492 / JCM 5070 / NBRC 14893 / NCIMB 12804 / NRRL 8165 / MA-4680), this protein is ATP synthase subunit b.